Consider the following 638-residue polypeptide: Neuroendocrine convertase 2 (638 aa).

Positions 1 to 25 are cleaved as a signal peptide; that stretch reads MKGGCVSQWKAAAGFLFCVMVFASA. Residues 26–109 constitute a propeptide that is removed on maturation; sequence ERPVFTNHFL…QQEGFDRKKR (84 aa). The Peptidase S8 domain occupies 129–453; it reads QWYLINTGQA…YGVLDAGAMV (325 aa). Residues aspartate 167 and histidine 208 each act as charge relay system in the active site. Cystine bridges form between cysteine 225/cysteine 376 and cysteine 317/cysteine 347. N-linked (GlcNAc...) asparagine glycosylation occurs at asparagine 375. The active-site Charge relay system is serine 384. Residues 461 to 597 form the P/Homo B domain; the sequence is TVPERFHCVG…TLMLHGTQSA (137 aa). Cysteine 468 and cysteine 494 are joined by a disulfide. Residues asparagine 514 and asparagine 524 are each glycosylated (N-linked (GlcNAc...) asparagine).

It belongs to the peptidase S8 family. Furin subfamily.

The protein resides in the cytoplasmic vesicle. It is found in the secretory vesicle. It localises to the secreted. The catalysed reaction is Release of protein hormones and neuropeptides from their precursors, generally by hydrolysis of -Lys-Arg-|- bonds.. In terms of biological role, serine endopeptidase which is involved in the processing of hormone and other protein precursors at sites comprised of pairs of basic amino acid residues. Responsible for the release of glucagon from proglucagon in pancreatic A cells. The chain is Neuroendocrine convertase 2 (PCSK2) from Pongo abelii (Sumatran orangutan).